A 977-amino-acid chain; its full sequence is Pro-apoptotic serine protease NMA111 (977 aa).

Residues 1–36 (MTIQAHKRTLSEVSTSSVGQLKRREGYTEDYTDEGS) form a disordered region. The interval 64–254 (VVSVHFAQVA…LPLDRILRAL (191 aa)) is serine protease. Residues His102, Asp133, and Ser216 each act as charge relay system in the active site. PDZ domains are found at residues 271–356 (QWLL…LVVQ) and 749–835 (SVLQ…VRKG).

This sequence belongs to the peptidase S1C family.

Its subcellular location is the nucleus. Its function is as follows. Nuclear serine protease which mediates apoptosis. The sequence is that of Pro-apoptotic serine protease NMA111 (NMA111) from Eremothecium gossypii (strain ATCC 10895 / CBS 109.51 / FGSC 9923 / NRRL Y-1056) (Yeast).